The chain runs to 120 residues: NAD(P)H-quinone oxidoreductase subunit 3, chloroplastic (120 aa).

Helical transmembrane passes span 9–29 (IFWAFLIISSVIPILAFLISG), 64–84 (MFALVFVVFDVETVFLYPWAM), and 88–108 (VLGVSVFIEALIFVLILIVGS).

It belongs to the complex I subunit 3 family. NDH is composed of at least 16 different subunits, 5 of which are encoded in the nucleus.

Its subcellular location is the plastid. It localises to the chloroplast thylakoid membrane. The enzyme catalyses a plastoquinone + NADH + (n+1) H(+)(in) = a plastoquinol + NAD(+) + n H(+)(out). It carries out the reaction a plastoquinone + NADPH + (n+1) H(+)(in) = a plastoquinol + NADP(+) + n H(+)(out). Its function is as follows. NDH shuttles electrons from NAD(P)H:plastoquinone, via FMN and iron-sulfur (Fe-S) centers, to quinones in the photosynthetic chain and possibly in a chloroplast respiratory chain. The immediate electron acceptor for the enzyme in this species is believed to be plastoquinone. Couples the redox reaction to proton translocation, and thus conserves the redox energy in a proton gradient. This Buxus microphylla (Littleleaf boxwood) protein is NAD(P)H-quinone oxidoreductase subunit 3, chloroplastic.